Consider the following 340-residue polypeptide: Ferredoxin--NADP reductase (340 aa).

The FAD site is built by D33, Q41, Y46, A86, F120, D286, and T327.

This sequence belongs to the ferredoxin--NADP reductase type 2 family. In terms of assembly, homodimer. FAD serves as cofactor.

It carries out the reaction 2 reduced [2Fe-2S]-[ferredoxin] + NADP(+) + H(+) = 2 oxidized [2Fe-2S]-[ferredoxin] + NADPH. The chain is Ferredoxin--NADP reductase from Rickettsia rickettsii (strain Iowa).